Consider the following 140-residue polypeptide: uncharacterized protein (140 aa).

14 tandem repeats follow at residues 1–10 (MFARLCPVSE), 11–20 (TFGRLCPVSE), 21–30 (TFARLCPVSE), 31–40 (TFARLCPVSE), 41–50 (TFARLCPVSE), 51–60 (TFGRLCPVSE), 61–70 (MFGRLSPVSE), 71–80 (TFGRLCPVSE), 81–90 (TFGRLCPVSE), 91–100 (MFARLCPVSE), 101–110 (TFGRLSPVSE), 111–120 (MFGRLCPVSE), 121–130 (MFGRLCPVSE), and 131–140 (MFGRLCPVIT). The tract at residues 1–140 (MFARLCPVSE…MFGRLCPVIT (140 aa)) is 14 X 10 AA tandem repeats of [MT]-F-[AG]-R-L-[CS]-P-V-[SI]-[ET].

This is an uncharacterized protein from Homo sapiens (Human).